The chain runs to 99 residues: Aspartyl/glutamyl-tRNA(Asn/Gln) amidotransferase subunit C (99 aa).

It belongs to the GatC family. As to quaternary structure, heterotrimer of A, B and C subunits.

It catalyses the reaction L-glutamyl-tRNA(Gln) + L-glutamine + ATP + H2O = L-glutaminyl-tRNA(Gln) + L-glutamate + ADP + phosphate + H(+). The enzyme catalyses L-aspartyl-tRNA(Asn) + L-glutamine + ATP + H2O = L-asparaginyl-tRNA(Asn) + L-glutamate + ADP + phosphate + 2 H(+). Allows the formation of correctly charged Asn-tRNA(Asn) or Gln-tRNA(Gln) through the transamidation of misacylated Asp-tRNA(Asn) or Glu-tRNA(Gln) in organisms which lack either or both of asparaginyl-tRNA or glutaminyl-tRNA synthetases. The reaction takes place in the presence of glutamine and ATP through an activated phospho-Asp-tRNA(Asn) or phospho-Glu-tRNA(Gln). The sequence is that of Aspartyl/glutamyl-tRNA(Asn/Gln) amidotransferase subunit C from Polaromonas sp. (strain JS666 / ATCC BAA-500).